We begin with the raw amino-acid sequence, 355 residues long: UDP-N-acetylglucosamine--N-acetylmuramyl-(pentapeptide) pyrophosphoryl-undecaprenol N-acetylglucosamine transferase (355 aa).

Residues threonine 13–glycine 15, asparagine 125, arginine 162, serine 190, isoleucine 244, and glutamine 289 contribute to the UDP-N-acetyl-alpha-D-glucosamine site.

It belongs to the glycosyltransferase 28 family. MurG subfamily.

It is found in the cell inner membrane. The enzyme catalyses di-trans,octa-cis-undecaprenyl diphospho-N-acetyl-alpha-D-muramoyl-L-alanyl-D-glutamyl-meso-2,6-diaminopimeloyl-D-alanyl-D-alanine + UDP-N-acetyl-alpha-D-glucosamine = di-trans,octa-cis-undecaprenyl diphospho-[N-acetyl-alpha-D-glucosaminyl-(1-&gt;4)]-N-acetyl-alpha-D-muramoyl-L-alanyl-D-glutamyl-meso-2,6-diaminopimeloyl-D-alanyl-D-alanine + UDP + H(+). It functions in the pathway cell wall biogenesis; peptidoglycan biosynthesis. Its function is as follows. Cell wall formation. Catalyzes the transfer of a GlcNAc subunit on undecaprenyl-pyrophosphoryl-MurNAc-pentapeptide (lipid intermediate I) to form undecaprenyl-pyrophosphoryl-MurNAc-(pentapeptide)GlcNAc (lipid intermediate II). This is UDP-N-acetylglucosamine--N-acetylmuramyl-(pentapeptide) pyrophosphoryl-undecaprenol N-acetylglucosamine transferase from Neisseria gonorrhoeae (strain ATCC 700825 / FA 1090).